Reading from the N-terminus, the 335-residue chain is Probable UDP-N-acetylglucosamine pyrophosphorylase (335 aa).

The Substrate binding motif lies at 45–48 (LSGG). Residues 45–48 (LSGG), Lys59, Gln120, and Gly145 each bind UTP. Asn146 is a substrate binding site. Asp170 contacts UTP. The Substrate binding motif lies at 218–219 (EY). Residue Lys278 participates in UTP binding. Lys308 provides a ligand contact to substrate.

This sequence belongs to the UDPGP type 1 family.

The protein resides in the cytoplasm. It catalyses the reaction N-acetyl-alpha-D-glucosamine 1-phosphate + UTP + H(+) = UDP-N-acetyl-alpha-D-glucosamine + diphosphate. It participates in nucleotide-sugar biosynthesis; UDP-N-acetyl-alpha-D-glucosamine biosynthesis; UDP-N-acetyl-alpha-D-glucosamine from N-acetyl-alpha-D-glucosamine 1-phosphate: step 1/1. In Encephalitozoon cuniculi (strain GB-M1) (Microsporidian parasite), this protein is Probable UDP-N-acetylglucosamine pyrophosphorylase (UAP1).